The sequence spans 261 residues: Triosephosphate isomerase (261 aa).

Residue 10–12 (NWK) participates in substrate binding. The active-site Electrophile is His100. The Proton acceptor role is filled by Glu172. Residues Gly178, Ser218, and 239–240 (GG) each bind substrate.

This sequence belongs to the triosephosphate isomerase family. In terms of assembly, homodimer.

The protein resides in the cytoplasm. The catalysed reaction is D-glyceraldehyde 3-phosphate = dihydroxyacetone phosphate. It participates in carbohydrate biosynthesis; gluconeogenesis. It functions in the pathway carbohydrate degradation; glycolysis; D-glyceraldehyde 3-phosphate from glycerone phosphate: step 1/1. In terms of biological role, involved in the gluconeogenesis. Catalyzes stereospecifically the conversion of dihydroxyacetone phosphate (DHAP) to D-glyceraldehyde-3-phosphate (G3P). In Nocardia farcinica (strain IFM 10152), this protein is Triosephosphate isomerase.